The following is a 654-amino-acid chain: Transcription factor E2-alpha (654 aa).

A 9aaTAD motif is present at residues 19-27 (LLDFSMMFP). Residues 31–103 (TNGKGRPASL…LGPGLGGKSG (73 aa)) form a disordered region. Residues 55 to 68 (SSGSWGSGDQSSSS) show a composition bias toward low complexity. Residues 69–79 (FDPSRTFSEGT) are compositionally biased toward polar residues. Residues 84–94 (SHSSLSSSTFL) are compositionally biased toward low complexity. Ser-134 and Ser-139 each carry phosphoserine. Disordered regions lie at residues 135-205 (PGPL…SAKT), 239-268 (MLGG…FGGL), 292-329 (SFSS…GSSG), and 343-385 (DHSS…YDGG). A compositionally biased stretch (low complexity) spans 147–156 (SQYYPSYSGS). The Nuclear localization signal motif lies at 170–176 (PKKVRKV). The span at 256–268 (VGSSGSSSTFGGL) shows a compositional bias: low complexity. Residues 343 to 354 (DHSSNNFSSSPS) show a composition bias toward low complexity. Thr-355 carries the phosphothreonine modification. Ser-359 is modified (phosphoserine). Arg-371 carries the omega-N-methylarginine modification. Position 379 is a phosphoserine (Ser-379). The segment at 389–425 (LQSKIEDHLDEAIHVLRSHAVGTAGDMHTLLPGHGAL) is leucine-zipper. The tract at residues 461–552 (NHAALPSQPG…KAEREKERRV (92 aa)) is disordered. Lys-498 participates in a covalent cross-link: Glycyl lysine isopeptide (Lys-Gly) (interchain with G-Cter in SUMO2). A compositionally biased stretch (basic and acidic residues) spans 512 to 523 (DHSEEEKKELKA). Ser-529 carries the phosphoserine modification. Asp-531 is modified (phosphothreonine). Positions 542-552 (QKAEREKERRV) are enriched in basic and acidic residues. The region spanning 549 to 602 (ERRVANNARERLRVRDINEAFKELGRMCQLHLNSEKPQTKLLILHQAVSVILNL) is the bHLH domain. A Glycyl lysine isopeptide (Lys-Gly) (interchain with G-Cter in SUMO2) cross-link involves residue Lys-625. A disordered region spans residues 633-654 (PQMVLSAPHPGLSEAHNPAGHM).

In terms of assembly, homodimer. Heterodimer; efficient DNA binding requires dimerization with another bHLH protein. Forms a heterodimer with ASH1, TWIST1 and TWIST2. Forms a heterodimer with MYOG; heterodimerization enhances MYOG DNA-binding and transcriptional activities. Forms a heterodimer with NEUROD1; the heterodimer is inhibited in presence of ID2, but not NR0B2, to E-box element. Forms a heterodimer with TCF15; the heterodimer binds E-box element. Forms a heterodimer with ATOH8; repress transcription of TCF3 and TCF3/NEUROG3 dimer-induced transactivation of E box-dependent promoters. Component of a nuclear TAL-1 complex composed at least of CBFA2T3, LDB1, TAL1 and TCF3. Interacts with NEUROD2, PTF1A and TGFB1I1. Interacts with EP300 and UBE2I. Interacts with BHLHA9. Interacts with ASB2; the interaction is mediated by SKP2 and targets TCF3 for Notch-induced proteasomal degradation. Forms a heterodimer with ATOH7; required for ATOH7 DNA-binding. As to quaternary structure, interacts with RALGAPA1 and FIGLA. In terms of processing, phosphorylated following NGF stimulation. Undergoes Notch-induced ubiquitination and subsequent proteasomal degradation which is mediated by ASB1 or ASB2, the substrate-recognition components of probable ECS E3 ubiquitin-protein ligase complexes.

It localises to the nucleus. In terms of biological role, transcriptional regulator involved in the initiation of neuronal differentiation and mesenchymal to epithelial transition. Heterodimers between TCF3 and tissue-specific basic helix-loop-helix (bHLH) proteins play major roles in determining tissue-specific cell fate during embryogenesis, like muscle or early B-cell differentiation. Together with TCF15, required for the mesenchymal to epithelial transition. Dimers bind DNA on E-box motifs: 5'-CANNTG-3'. Binds to the kappa-E2 site in the kappa immunoglobulin gene enhancer. Binds to IEB1 and IEB2, which are short DNA sequences in the insulin gene transcription control region. Its function is as follows. Facilitates ATOH7 binding to DNA at the consensus sequence 5'-CAGGTG-3', and positively regulates transcriptional activity. In Homo sapiens (Human), this protein is Transcription factor E2-alpha (TCF3).